A 126-amino-acid chain; its full sequence is Histone H2B type 3-B (126 aa).

Over residues 1–12 the composition is skewed to low complexity; it reads MPDPSKSAPAPK. The interval 1-35 is disordered; the sequence is MPDPSKSAPAPKKGSKKAVTKAQKKDGKKRKRGRK. Position 2 is an N-acetylproline (Pro-2). Residue Lys-6 is modified to N6-(2-hydroxyisobutyryl)lysine; alternate. Lys-6 bears the N6-(beta-hydroxybutyryl)lysine; alternate mark. Lys-6 is subject to N6-acetyllysine; alternate. Lys-6 is subject to N6-butyryllysine; alternate. Residue Lys-6 is modified to N6-crotonyllysine; alternate. An N6-lactoyllysine; alternate modification is found at Lys-6. Lys-6 participates in a covalent cross-link: Glycyl lysine isopeptide (Lys-Gly) (interchain with G-Cter in SUMO2); alternate. Ser-7 bears the ADP-ribosylserine mark. Lys-12 bears the N6-(beta-hydroxybutyryl)lysine; alternate mark. Residues Lys-12 and Lys-13 each carry the N6-acetyllysine; alternate modification. N6-crotonyllysine; alternate is present on residues Lys-12 and Lys-13. Lys-12 carries the post-translational modification N6-lactoyllysine; alternate. Lys-13 carries the post-translational modification N6-(2-hydroxyisobutyryl)lysine; alternate. Ser-15 carries the phosphoserine; by STK4/MST1 modification. Lys-16, Lys-17, Lys-21, and Lys-24 each carry N6-acetyllysine; alternate. N6-crotonyllysine; alternate is present on residues Lys-16, Lys-17, Lys-21, and Lys-24. 4 positions are modified to N6-lactoyllysine; alternate: Lys-16, Lys-17, Lys-21, and Lys-24. Lys-17 and Lys-21 each carry N6-(beta-hydroxybutyryl)lysine; alternate. Lys-17 carries the N6-glutaryllysine; alternate modification. N6-(2-hydroxyisobutyryl)lysine; alternate occurs at positions 21 and 24. An N6-butyryllysine; alternate modification is found at Lys-21. Lys-21 is covalently cross-linked (Glycyl lysine isopeptide (Lys-Gly) (interchain with G-Cter in SUMO2); alternate). Position 25 is an N6-(2-hydroxyisobutyryl)lysine (Lys-25). Lys-35 bears the N6-(2-hydroxyisobutyryl)lysine; alternate mark. Lys-35 is subject to N6-(beta-hydroxybutyryl)lysine; alternate. At Lys-35 the chain carries N6-crotonyllysine; alternate. N6-glutaryllysine; alternate is present on Lys-35. Residue Lys-35 is modified to N6-succinyllysine; alternate. Residue Lys-35 forms a Glycyl lysine isopeptide (Lys-Gly) (interchain with G-Cter in ubiquitin); alternate linkage. Glu-36 is modified (polyADP-ribosyl glutamic acid). Ser-37 carries the phosphoserine; by AMPK modification. N6-(2-hydroxyisobutyryl)lysine; alternate is present on residues Lys-44, Lys-47, and Lys-58. The residue at position 44 (Lys-44) is an N6-lactoyllysine; alternate. Lys-44 and Lys-47 each carry N6-glutaryllysine; alternate. Lys-47 carries the N6-methyllysine; alternate modification. Position 58 is an N6,N6-dimethyllysine; alternate (Lys-58). Arg-80 is modified (dimethylated arginine). Residue Lys-86 is modified to N6-(2-hydroxyisobutyryl)lysine; alternate. Lys-86 bears the N6-(beta-hydroxybutyryl)lysine; alternate mark. Residue Lys-86 is modified to N6-acetyllysine; alternate. An N6-lactoyllysine; alternate modification is found at Lys-86. Lys-86 is modified (N6,N6,N6-trimethyllysine; alternate). 2 positions are modified to omega-N-methylarginine: Arg-87 and Arg-93. Lys-109 bears the N6-(2-hydroxyisobutyryl)lysine; alternate mark. Lys-109 carries the N6-lactoyllysine; alternate modification. Lys-109 carries the post-translational modification N6-glutaryllysine; alternate. Lys-109 is subject to N6-methyllysine; alternate. A glycan (O-linked (GlcNAc) serine) is linked at Ser-113. A Phosphothreonine modification is found at Thr-116. Lys-117 and Lys-121 each carry N6-(2-hydroxyisobutyryl)lysine; alternate. N6-(beta-hydroxybutyryl)lysine; alternate is present on residues Lys-117 and Lys-121. An N6-lactoyllysine; alternate mark is found at Lys-117 and Lys-121. 2 positions are modified to N6-glutaryllysine; alternate: Lys-117 and Lys-121. 2 positions are modified to N6-succinyllysine; alternate: Lys-117 and Lys-121. Lys-117 bears the N6-malonyllysine; alternate mark. N6-methylated lysine; alternate is present on Lys-117. Lys-121 is covalently cross-linked (Glycyl lysine isopeptide (Lys-Gly) (interchain with G-Cter in ubiquitin); alternate).

Belongs to the histone H2B family. In terms of assembly, the nucleosome is a histone octamer containing two molecules each of H2A, H2B, H3 and H4 assembled in one H3-H4 heterotetramer and two H2A-H2B heterodimers. The octamer wraps approximately 147 bp of DNA. In terms of processing, monoubiquitination at Lys-35 (H2BK34Ub) by the MSL1/MSL2 dimer is required for histone H3 'Lys-4' (H3K4me) and 'Lys-79' (H3K79me) methylation and transcription activation at specific gene loci, such as HOXA9 and MEIS1 loci. Similarly, monoubiquitination at Lys-121 (H2BK120Ub) by the RNF20/40 complex gives a specific tag for epigenetic transcriptional activation and is also prerequisite for histone H3 'Lys-4' and 'Lys-79' methylation. It also functions cooperatively with the FACT dimer to stimulate elongation by RNA polymerase II. H2BK120Ub also acts as a regulator of mRNA splicing: deubiquitination by USP49 is required for efficient cotranscriptional splicing of a large set of exons. Post-translationally, phosphorylation at Ser-37 (H2BS36ph) by AMPK in response to stress promotes transcription. Phosphorylated on Ser-15 (H2BS14ph) by STK4/MST1 during apoptosis; which facilitates apoptotic chromatin condensation. Also phosphorylated on Ser-15 in response to DNA double strand breaks (DSBs), and in correlation with somatic hypermutation and immunoglobulin class-switch recombination. GlcNAcylation at Ser-113 promotes monoubiquitination of Lys-121. It fluctuates in response to extracellular glucose, and associates with transcribed genes. In terms of processing, ADP-ribosylated by PARP1 or PARP2 on Ser-7 (H2BS6ADPr) in response to DNA damage. H2BS6ADPr promotes recruitment of CHD1L. Poly ADP-ribosylation on Glu-36 (H2BE35ADPr) by PARP1 regulates adipogenesis: it inhibits phosphorylation at Ser-37 (H2BS36ph), thereby blocking expression of pro-adipogenetic genes. Post-translationally, crotonylation (Kcr) is specifically present in male germ cells and marks testis-specific genes in post-meiotic cells, including X-linked genes that escape sex chromosome inactivation in haploid cells. Crotonylation marks active promoters and enhancers and confers resistance to transcriptional repressors. It is also associated with post-meiotically activated genes on autosomes. Lactylated in macrophages by EP300/P300 by using lactoyl-CoA directly derived from endogenous or exogenous lactate, leading to stimulates gene transcription.

It localises to the nucleus. It is found in the chromosome. Its function is as follows. Core component of nucleosome. Nucleosomes wrap and compact DNA into chromatin, limiting DNA accessibility to the cellular machineries which require DNA as a template. Histones thereby play a central role in transcription regulation, DNA repair, DNA replication and chromosomal stability. DNA accessibility is regulated via a complex set of post-translational modifications of histones, also called histone code, and nucleosome remodeling. The protein is Histone H2B type 3-B of Homo sapiens (Human).